A 507-amino-acid chain; its full sequence is Maturase K (507 aa).

Belongs to the intron maturase 2 family. MatK subfamily.

It is found in the plastid. The protein resides in the chloroplast. Its function is as follows. Usually encoded in the trnK tRNA gene intron. Probably assists in splicing its own and other chloroplast group II introns. The chain is Maturase K from Ranunculus macranthus (Large buttercup).